We begin with the raw amino-acid sequence, 315 residues long: Melanoma-associated antigen 9 (315 aa).

The span at 1–13 (MSLEQRSPHCKPD) shows a compositional bias: basic and acidic residues. The tract at residues 1-67 (MSLEQRSPHC…PQSPQGGASS (67 aa)) is disordered. Over residues 50 to 67 (SAAGSSSPPQSPQGGASS) the composition is skewed to low complexity. One can recognise an MAGE domain in the interval 108–307 (LKLKVAELVH…ICYPSLYEEV (200 aa)).

Expressed in many tumors of several types, such as melanoma, head and neck squamous cell carcinoma, lung carcinoma and breast carcinoma, but not in normal tissues except for testes and placenta.

Its function is as follows. Not known, though may play a role in embryonal development and tumor transformation or aspects of tumor progression. The chain is Melanoma-associated antigen 9 (MAGEA9) from Homo sapiens (Human).